The primary structure comprises 655 residues: MATPSPTKTTWKLQEIVAHGSSVSSVVLGKSSGRLVATGGDDCRVNLWSVNKPNCIMSLTGHTTPVESVRFNNAEELIVAGSQSGSLRVWDLEAAKILRTLMGHKANVCSLDFHPYGDFVASGSLDTNIKLWDVRRKGCVFRYKGHTQAVRCLRFSPDGKWLASASDDHSVKLWDLTAGKMMAELSEHKGPVNIIEFHPNEYLLASGSADRTVRFWDLEKFQLIGCTEGETIPVRAILFSSDGGCIFCGGRDALRVYGWEPDQCFDTVPVGWGKVCDLAICNKQLIGVSSAQSTISSFVVDLTRVKMTGCAPQGPVPAEMPISQPAPAGTSLRRIYERPSTTCSKPKRVSPTSDDEEKESRAEIQNPEDYKEIFQPKNAISRTPPRNSEPFPAPPEDDTSILKEPVAPIPDVVTPATSNKNNTEQLQRPPVAASTPIVCQEPSPVPAPQSKPPVISAARNEPIGLKAADFLPAVKTSSPTEVVDDEAVSQIRKGHDTMCMVLTSRMRNLDTVRAVWSSGDIKTSIDSAVAINDLSVVVDLLNIINQKASLWKLDLCLTVLPQIEKMLQSKYESYVQTGCISLKLILQRFLPLITDILAAPPSVGVDISREERLSKCKLCYKQLRILSPLVKSKASQSGRYGSAFRELHLLMSGLE.

6 WD repeats span residues 18-58, 61-100, 103-142, 145-184, 187-226, and 229-269; these read AHGS…CIMS, GHTT…ILRT, GHKA…CVFR, GHTQ…MMAE, EHKG…LIGC, and GETI…DTVP. The disordered stretch occupies residues 316–453; the sequence is VPAEMPISQP…PVPAPQSKPP (138 aa). Positions 358 to 374 are enriched in basic and acidic residues; the sequence is KESRAEIQNPEDYKEIF. Positions 415 to 426 are enriched in polar residues; sequence PATSNKNNTEQL.

Belongs to the WD repeat KATNB1 family. In terms of assembly, interacts with katna1. This interaction enhances the microtubule binding and severing activity of katna1 and also targets this activity to the centrosome.

The protein resides in the cytoplasm. Its subcellular location is the cytoskeleton. It localises to the microtubule organizing center. It is found in the centrosome. The protein localises to the spindle pole. The protein resides in the spindle. Participates in a complex which severs microtubules in an ATP-dependent manner. May act to target the enzymatic subunit of this complex to sites of action such as the centrosome. Microtubule severing may promote rapid reorganization of cellular microtubule arrays and the release of microtubules from the centrosome following nucleation. The sequence is that of Katanin p80 WD40 repeat-containing subunit B1 (katnb1) from Xenopus tropicalis (Western clawed frog).